Reading from the N-terminus, the 313-residue chain is Porphobilinogen deaminase 2 (313 aa).

Cysteine 246 is modified (S-(dipyrrolylmethanemethyl)cysteine).

Belongs to the HMBS family. As to quaternary structure, monomer. Dipyrromethane is required as a cofactor.

It carries out the reaction 4 porphobilinogen + H2O = hydroxymethylbilane + 4 NH4(+). It participates in porphyrin-containing compound metabolism; protoporphyrin-IX biosynthesis; coproporphyrinogen-III from 5-aminolevulinate: step 2/4. In terms of biological role, tetrapolymerization of the monopyrrole PBG into the hydroxymethylbilane pre-uroporphyrinogen in several discrete steps. This Streptomyces coelicolor (strain ATCC BAA-471 / A3(2) / M145) protein is Porphobilinogen deaminase 2 (hemC2).